We begin with the raw amino-acid sequence, 159 residues long: 2-C-methyl-D-erythritol 2,4-cyclodiphosphate synthase (159 aa).

A divalent metal cation is bound by residues Asp-8 and His-10. 4-CDP-2-C-methyl-D-erythritol 2-phosphate is bound by residues 8-10 (DVH) and 34-35 (HS). Residue His-42 coordinates a divalent metal cation. Residues 56-58 (DIG), 61-65 (FPDTD), 100-106 (AQAPKML), 132-135 (TTTE), Phe-139, and Arg-142 each bind 4-CDP-2-C-methyl-D-erythritol 2-phosphate.

The protein belongs to the IspF family. Homotrimer. A divalent metal cation is required as a cofactor.

It carries out the reaction 4-CDP-2-C-methyl-D-erythritol 2-phosphate = 2-C-methyl-D-erythritol 2,4-cyclic diphosphate + CMP. It functions in the pathway isoprenoid biosynthesis; isopentenyl diphosphate biosynthesis via DXP pathway; isopentenyl diphosphate from 1-deoxy-D-xylulose 5-phosphate: step 4/6. In terms of biological role, involved in the biosynthesis of isopentenyl diphosphate (IPP) and dimethylallyl diphosphate (DMAPP), two major building blocks of isoprenoid compounds. Catalyzes the conversion of 4-diphosphocytidyl-2-C-methyl-D-erythritol 2-phosphate (CDP-ME2P) to 2-C-methyl-D-erythritol 2,4-cyclodiphosphate (ME-CPP) with a corresponding release of cytidine 5-monophosphate (CMP). The polypeptide is 2-C-methyl-D-erythritol 2,4-cyclodiphosphate synthase (Escherichia coli O127:H6 (strain E2348/69 / EPEC)).